We begin with the raw amino-acid sequence, 517 residues long: General transcription factor IIF subunit 1 (517 aa).

At alanine 2 the chain carries N-acetylalanine. Residue threonine 156 is modified to Phosphothreonine. Residues 178–466 (QQRRLKDQDQ…DAVRRYLTRK (289 aa)) form a disordered region. A phosphoserine mark is found at serine 217, serine 218, serine 221, and serine 224. Positions 232-251 (PKAKKKAPLAKGGRKKKKKK) are enriched in basic residues. 2 stretches are compositionally biased toward acidic residues: residues 255-270 (DEAFEDSDDGDFEGQE) and 303-325 (EQSDSSEESEEEKPPEEDKEEEE). Threonine 331 bears the Phosphothreonine mark. The span at 343 to 355 (EESDSSEESDIDS) shows a compositional bias: acidic residues. The segment covering 364 to 374 (AKKKTPPKRER) has biased composition (basic residues). Serine 377, serine 380, serine 381, and serine 385 each carry phosphoserine. Residues 377-391 (SGGSSRGNSRPGTPS) show a composition bias toward low complexity. Threonine 389 is modified (phosphothreonine). Serine 391 carries the post-translational modification Phosphoserine. Lysine 407 is subject to N6-acetyllysine. Residues 428-452 (GPQSLSGKSTPQPPSGKTTPNSGDV) show a composition bias toward polar residues. 3 positions are modified to phosphoserine: serine 431, serine 433, and serine 436. A phosphothreonine mark is found at threonine 437 and threonine 446. At serine 449 the chain carries Phosphoserine. Zn(2+) is bound by residues glutamate 503, histidine 512, and glutamate 517.

This sequence belongs to the TFIIF alpha subunit family. Heterodimer of an alpha and a beta subunit. Interacts with GTF2F2, CTDP1, TAF6/TAFII80 and URI1. Interacts with GTF2B (via C-terminus and preferentially via acetylated form); this interaction prevents binding of GTF2B to GTF2F2. Part of TBP-based Pol II pre-initiation complex (PIC), in which Pol II core assembles with general transcription factors and other specific initiation factors including GTF2E1, GTF2E2, GTF2F1, GTF2F2, TCEA1, ERCC2, ERCC3, GTF2H2, GTF2H3, GTF2H4, GTF2H5, GTF2A1, GTF2A2, GTF2B and TBP; this large multi-subunit PIC complex mediates DNA unwinding and targets Pol II core to the transcription start site where the first phosphodiester bond forms. Post-translationally, phosphorylated on Ser and other residues by TAF1 and casein kinase II-like kinases.

It localises to the nucleus. Functionally, TFIIF is a general transcription initiation factor that binds to RNA polymerase II and helps to recruit it to the initiation complex in collaboration with TFIIB. It promotes transcription elongation. The protein is General transcription factor IIF subunit 1 (GTF2F1) of Homo sapiens (Human).